Consider the following 212-residue polypeptide: Cyclin-P4-1 (212 aa).

Belongs to the cyclin family. Cyclin U/P subfamily.

The protein is Cyclin-P4-1 (CYCP4-1) of Oryza sativa subsp. japonica (Rice).